Consider the following 299-residue polypeptide: Coenzyme PQQ synthesis protein B (299 aa).

Belongs to the PqqB family.

It participates in cofactor biosynthesis; pyrroloquinoline quinone biosynthesis. Its function is as follows. May be involved in the transport of PQQ or its precursor to the periplasm. This is Coenzyme PQQ synthesis protein B from Xanthomonas oryzae pv. oryzae (strain MAFF 311018).